Reading from the N-terminus, the 241-residue chain is MATPHINAEMGDFADVVLMPGDPLRAKHIAETFLKDVKQVNDVRGMLGFTGTYKGRKISVMGHGMGIPSCSIYAKELITDFGVKKIIRVGSCGAVREDVKLRDVVIGMGACTDSKVNRLRFKDHDYAAIADFDMTRNAVDAAKAKGLNVRVGNLFSADLFYTPDPQMFDVMKKYGILGVEMEAAGIYGVAAEFGAKALTICTVSDHIVSGEQTTAAERQTTFNDMIEIALESVLLGDKESY.

Position 5 (His-5) interacts with a purine D-ribonucleoside. Residues Gly-21, Arg-25, Arg-44, and 88-91 (RVGS) each bind phosphate. A purine D-ribonucleoside-binding positions include 180 to 182 (EME) and 204 to 205 (SD). Asp-205 acts as the Proton donor in catalysis.

It belongs to the PNP/UDP phosphorylase family. Homohexamer; trimer of homodimers.

It carries out the reaction a purine D-ribonucleoside + phosphate = a purine nucleobase + alpha-D-ribose 1-phosphate. The catalysed reaction is a purine 2'-deoxy-D-ribonucleoside + phosphate = a purine nucleobase + 2-deoxy-alpha-D-ribose 1-phosphate. Functionally, catalyzes the reversible phosphorolytic breakdown of the N-glycosidic bond in the beta-(deoxy)ribonucleoside molecules, with the formation of the corresponding free purine bases and pentose-1-phosphate. The protein is Purine nucleoside phosphorylase DeoD-type of Yersinia enterocolitica serotype O:8 / biotype 1B (strain NCTC 13174 / 8081).